The primary structure comprises 94 residues: Integration host factor subunit beta (94 aa).

The protein belongs to the bacterial histone-like protein family. In terms of assembly, heterodimer of an alpha and a beta chain.

This protein is one of the two subunits of integration host factor, a specific DNA-binding protein that functions in genetic recombination as well as in transcriptional and translational control. This chain is Integration host factor subunit beta, found in Vibrio campbellii (strain ATCC BAA-1116).